The sequence spans 161 residues: Putative pre-16S rRNA nuclease (161 aa).

This sequence belongs to the YqgF nuclease family.

It is found in the cytoplasm. Could be a nuclease involved in processing of the 5'-end of pre-16S rRNA. The chain is Putative pre-16S rRNA nuclease from Bradyrhizobium sp. (strain BTAi1 / ATCC BAA-1182).